We begin with the raw amino-acid sequence, 334 residues long: Ornithine carbamoyltransferase (334 aa).

Carbamoyl phosphate-binding positions include 57–60 (STRT), Q84, R108, and 135–138 (HPTQ). L-ornithine contacts are provided by residues N169, D233, and 237 to 238 (SM). Carbamoyl phosphate is bound by residues 275-276 (CL) and R320.

Belongs to the aspartate/ornithine carbamoyltransferase superfamily. OTCase family.

Its subcellular location is the cytoplasm. The catalysed reaction is carbamoyl phosphate + L-ornithine = L-citrulline + phosphate + H(+). It functions in the pathway amino-acid biosynthesis; L-arginine biosynthesis; L-arginine from L-ornithine and carbamoyl phosphate: step 1/3. Its function is as follows. Reversibly catalyzes the transfer of the carbamoyl group from carbamoyl phosphate (CP) to the N(epsilon) atom of ornithine (ORN) to produce L-citrulline. This chain is Ornithine carbamoyltransferase, found in Vibrio cholerae serotype O1 (strain ATCC 39315 / El Tor Inaba N16961).